Reading from the N-terminus, the 264-residue chain is H-2 class II histocompatibility antigen, I-A beta chain (264 aa).

An N-terminal signal peptide occupies residues 1–31 (MVWLPRVPCVAAVILLLTVLSPPVALVRDSR). The beta-1 stretch occupies residues 32 to 121 (PWFLEYCKSE…IFDNFLVPRR (90 aa)). Topologically, residues 32–225 (PWFLEYCKSE…KAQSTSAQNK (194 aa)) are extracellular. 2 disulfide bridges follow: C42/C106 and C144/C200. An N-linked (GlcNAc...) asparagine glycan is attached at N46. The beta-2 stretch occupies residues 122–215 (VEPTVTVYPT…SLTDPVTVEW (94 aa)). In terms of domain architecture, Ig-like C1-type spans 124-214 (PTVTVYPTKT…PSLTDPVTVE (91 aa)). A connecting peptide region spans residues 216–225 (KAQSTSAQNK). A helical membrane pass occupies residues 226-248 (MLSGVGGFVLGLLFLRAGLFIYF). Over 249-264 (RNQKGQSGLQPTGLLS) the chain is Cytoplasmic.

This sequence belongs to the MHC class II family. Ubiquitinated in immature dendritic cells leading to down-regulation of MHC class II.

It localises to the membrane. The polypeptide is H-2 class II histocompatibility antigen, I-A beta chain (H2-Eb1) (Mus musculus (Mouse)).